Here is an 87-residue protein sequence, read N- to C-terminus: UPF0248 protein TSIB_1445 (87 aa).

It belongs to the UPF0248 family.

The polypeptide is UPF0248 protein TSIB_1445 (Thermococcus sibiricus (strain DSM 12597 / MM 739)).